The following is a 311-amino-acid chain: Aspartate carbamoyltransferase catalytic subunit (311 aa).

The carbamoyl phosphate site is built by arginine 55 and threonine 56. Lysine 85 is an L-aspartate binding site. Residues arginine 106, histidine 135, and glutamine 138 each contribute to the carbamoyl phosphate site. L-aspartate is bound by residues arginine 168 and arginine 230. The carbamoyl phosphate site is built by leucine 268 and proline 269.

The protein belongs to the aspartate/ornithine carbamoyltransferase superfamily. ATCase family. As to quaternary structure, heterododecamer (2C3:3R2) of six catalytic PyrB chains organized as two trimers (C3), and six regulatory PyrI chains organized as three dimers (R2).

The catalysed reaction is carbamoyl phosphate + L-aspartate = N-carbamoyl-L-aspartate + phosphate + H(+). The protein operates within pyrimidine metabolism; UMP biosynthesis via de novo pathway; (S)-dihydroorotate from bicarbonate: step 2/3. Catalyzes the condensation of carbamoyl phosphate and aspartate to form carbamoyl aspartate and inorganic phosphate, the committed step in the de novo pyrimidine nucleotide biosynthesis pathway. This is Aspartate carbamoyltransferase catalytic subunit from Escherichia coli O139:H28 (strain E24377A / ETEC).